The following is a 455-amino-acid chain: DNA N(6)-methyladenine demethylase ALKBH1C (455 aa).

Disordered stretches follow at residues 1–114 (MNHS…AGDN) and 173–194 (SSVE…SNES). The region spanning 345 to 455 (LPDICIVNFY…GRLNLTFRQY (111 aa)) is the Fe2OG dioxygenase domain. A 2-oxoglutarate-binding site is contributed by 352–354 (NFY). Fe cation is bound by residues His363, Asp365, and His423. 447–453 (RLNLTFR) serves as a coordination point for 2-oxoglutarate.

This sequence belongs to the alkB family. Requires Fe(2+) as cofactor. In terms of tissue distribution, expressed at low levels in roots and seedlings, but barely in cauline leaves, rosette leaves, stems, siliques and flowers.

The protein resides in the nucleus. It is found in the cytoplasm. It carries out the reaction an N(6)-methyl-2'-deoxyadenosine in DNA + 2-oxoglutarate + O2 = a 2'-deoxyadenosine in DNA + formaldehyde + succinate + CO2. Dioxygenase that catalyzes DNA N(6)-methyladenine (6 mA) demethylation with a low efficiency. The polypeptide is DNA N(6)-methyladenine demethylase ALKBH1C (Arabidopsis thaliana (Mouse-ear cress)).